A 505-amino-acid polypeptide reads, in one-letter code: Glycerol kinase (505 aa).

Residue Thr-14 participates in ADP binding. ATP is bound by residues Thr-14, Thr-15, and Ser-16. Thr-14 is a sn-glycerol 3-phosphate binding site. Arg-18 is a binding site for ADP. Residues Arg-84, Glu-85, Tyr-136, and Asp-246 each coordinate sn-glycerol 3-phosphate. Residues Arg-84, Glu-85, Tyr-136, Asp-246, and Gln-247 each coordinate glycerol. ADP-binding residues include Thr-268 and Gly-311. Positions 268, 311, 315, and 412 each coordinate ATP. ADP-binding residues include Gly-412 and Asn-416.

This sequence belongs to the FGGY kinase family.

It carries out the reaction glycerol + ATP = sn-glycerol 3-phosphate + ADP + H(+). It functions in the pathway polyol metabolism; glycerol degradation via glycerol kinase pathway; sn-glycerol 3-phosphate from glycerol: step 1/1. Inhibited by fructose 1,6-bisphosphate (FBP). Functionally, key enzyme in the regulation of glycerol uptake and metabolism. Catalyzes the phosphorylation of glycerol to yield sn-glycerol 3-phosphate. This is Glycerol kinase from Vibrio parahaemolyticus serotype O3:K6 (strain RIMD 2210633).